The sequence spans 190 residues: Threonylcarbamoyl-AMP synthase (190 aa).

The YrdC-like domain occupies serine 7 to glycine 190.

It belongs to the SUA5 family. TsaC subfamily.

It is found in the cytoplasm. It catalyses the reaction L-threonine + hydrogencarbonate + ATP = L-threonylcarbamoyladenylate + diphosphate + H2O. In terms of biological role, required for the formation of a threonylcarbamoyl group on adenosine at position 37 (t(6)A37) in tRNAs that read codons beginning with adenine. Catalyzes the conversion of L-threonine, HCO(3)(-)/CO(2) and ATP to give threonylcarbamoyl-AMP (TC-AMP) as the acyladenylate intermediate, with the release of diphosphate. The chain is Threonylcarbamoyl-AMP synthase from Sodalis glossinidius (strain morsitans).